The primary structure comprises 98 residues: ESAT-6-like protein EsxK (98 aa).

The protein belongs to the WXG100 family. CFP-10 subfamily. In terms of assembly, strongly interacts with EsxL to form a heterodimeric complex under reducing conditions. The complex is regulated by the redox state of EsxL.

The protein localises to the secreted. This Mycobacterium tuberculosis (strain ATCC 25618 / H37Rv) protein is ESAT-6-like protein EsxK.